Consider the following 485-residue polypeptide: Telomeric DNA-binding factor trf1 (485 aa).

Over residues Met-1–Ile-20 the composition is skewed to basic and acidic residues. Residues Met-1–Glu-23 form a disordered region. One can recognise an HTH myb-type domain in the interval Arg-400–Ala-457. The H-T-H motif DNA-binding region spans Trp-428–Leu-453.

Homodimer.

It is found in the nucleus. Binds the telomeric double-stranded TTACAGG repeat and regulates telomere length. The chain is Telomeric DNA-binding factor trf1 (trf1) from Schizosaccharomyces pombe (strain 972 / ATCC 24843) (Fission yeast).